The chain runs to 57 residues: Small ribosomal subunit protein bS21B (57 aa).

A disordered region spans residues R37–R57. The segment covering A43–R57 has biased composition (basic residues).

It belongs to the bacterial ribosomal protein bS21 family.

The chain is Small ribosomal subunit protein bS21B from Gloeobacter violaceus (strain ATCC 29082 / PCC 7421).